The primary structure comprises 1070 residues: DNA-directed RNA polymerase subunit beta (1070 aa).

This sequence belongs to the RNA polymerase beta chain family. As to quaternary structure, in plastids the minimal PEP RNA polymerase catalytic core is composed of four subunits: alpha, beta, beta', and beta''. When a (nuclear-encoded) sigma factor is associated with the core the holoenzyme is formed, which can initiate transcription.

It localises to the plastid. It is found in the chloroplast. It carries out the reaction RNA(n) + a ribonucleoside 5'-triphosphate = RNA(n+1) + diphosphate. In terms of biological role, DNA-dependent RNA polymerase catalyzes the transcription of DNA into RNA using the four ribonucleoside triphosphates as substrates. This is DNA-directed RNA polymerase subunit beta from Morus indica (Mulberry).